We begin with the raw amino-acid sequence, 212 residues long: Large ribosomal subunit protein uL4 (212 aa).

The protein belongs to the universal ribosomal protein uL4 family. Part of the 50S ribosomal subunit.

Functionally, one of the primary rRNA binding proteins, this protein initially binds near the 5'-end of the 23S rRNA. It is important during the early stages of 50S assembly. It makes multiple contacts with different domains of the 23S rRNA in the assembled 50S subunit and ribosome. In terms of biological role, forms part of the polypeptide exit tunnel. The sequence is that of Large ribosomal subunit protein uL4 from Caulobacter sp. (strain K31).